A 47-amino-acid polypeptide reads, in one-letter code: PhoP/PhoQ regulator MgrB (47 aa).

The helical transmembrane segment at 6–26 (WVALVVVVLACLLLWAQVFNM) threads the bilayer.

Belongs to the MgrB family. In terms of assembly, may form homooligomers. Probably interacts with the periplasmic domain of PhoQ.

The protein localises to the cell inner membrane. Functionally, phoP-regulated transcription is redox-sensitive, being activated when the periplasm becomes more reducing. MgrB acts between DsbA/DsbB and PhoP/PhoQ in this pathway. Represses PhoP/PhoQ signaling, possibly by binding to the periplasmic domain of PhoQ, altering its activity and that of downstream effector PhoP. The polypeptide is PhoP/PhoQ regulator MgrB (Escherichia coli O1:K1 / APEC).